The chain runs to 22 residues: Cysteine-rich venom protein collettin-a (22 aa).

Residues 1-15 show a composition bias toward basic and acidic residues; it reads SNKKNYQKEIVDKHN. The disordered stretch occupies residues 1 to 22; that stretch reads SNKKNYQKEIVDKHNALRRSVK.

The protein belongs to the CRISP family. In terms of processing, contains 8 disulfide bonds. In terms of tissue distribution, expressed by the venom gland.

It localises to the secreted. The protein is Cysteine-rich venom protein collettin-a of Pseudechis colletti (Collett's snake).